The sequence spans 30 residues: Trypsin inhibitor 3 (30 aa).

3 disulfides stabilise this stretch: C4–C21, C11–C23, and C17–C29.

The protein belongs to the protease inhibitor I7 (squash-type serine protease inhibitor) family.

It is found in the secreted. Its function is as follows. Inhibits trypsin. The protein is Trypsin inhibitor 3 of Momordica charantia (Bitter gourd).